The chain runs to 407 residues: Arginine deiminase (407 aa).

The active-site Amidino-cysteine intermediate is Cys-397.

Belongs to the arginine deiminase family.

The protein resides in the cytoplasm. It carries out the reaction L-arginine + H2O = L-citrulline + NH4(+). It functions in the pathway amino-acid degradation; L-arginine degradation via ADI pathway; carbamoyl phosphate from L-arginine: step 1/2. This Listeria welshimeri serovar 6b (strain ATCC 35897 / DSM 20650 / CCUG 15529 / CIP 8149 / NCTC 11857 / SLCC 5334 / V8) protein is Arginine deiminase.